The primary structure comprises 319 residues: Thioredoxin reductase (319 aa).

FAD contacts are provided by residues 11–14 (SGPA), 40–41 (VA), Q45, N54, V87, C145, D288, and 295–297 (RQA). C142 and C145 are joined by a disulfide.

It belongs to the class-II pyridine nucleotide-disulfide oxidoreductase family. Homodimer. FAD is required as a cofactor.

The protein localises to the cytoplasm. It catalyses the reaction [thioredoxin]-dithiol + NADP(+) = [thioredoxin]-disulfide + NADPH + H(+). In Eremothecium gossypii (strain ATCC 10895 / CBS 109.51 / FGSC 9923 / NRRL Y-1056) (Yeast), this protein is Thioredoxin reductase (TRR1).